The chain runs to 690 residues: Elongation factor G (690 aa).

A tr-type G domain is found at 8-283 (EYIRNIGICA…AVVGFLPSPI (276 aa)). GTP contacts are provided by residues 17 to 24 (AHIDAGKT), 81 to 85 (DTPGH), and 135 to 138 (NKMD).

Belongs to the TRAFAC class translation factor GTPase superfamily. Classic translation factor GTPase family. EF-G/EF-2 subfamily.

It is found in the cytoplasm. Its function is as follows. Catalyzes the GTP-dependent ribosomal translocation step during translation elongation. During this step, the ribosome changes from the pre-translocational (PRE) to the post-translocational (POST) state as the newly formed A-site-bound peptidyl-tRNA and P-site-bound deacylated tRNA move to the P and E sites, respectively. Catalyzes the coordinated movement of the two tRNA molecules, the mRNA and conformational changes in the ribosome. This chain is Elongation factor G, found in Rickettsia canadensis (strain McKiel).